We begin with the raw amino-acid sequence, 1041 residues long: Sodium/potassium-transporting ATPase subunit alpha (1041 aa).

4 consecutive transmembrane segments (helical) span residues 115–135 (FGGF…AYSI), 147–167 (NLYL…FSYY), 312–332 (LITG…FILG), and 338–358 (AVIF…LATV). The active-site 4-aspartylphosphate intermediate is the Asp-394. Lys-526 contacts ATP. Helical transmembrane passes span 808 to 828 (FLAF…ILCI), 870 to 890 (MAYG…YFVI), 935 to 955 (TCHT…LIIC), and 970 to 990 (WALN…SYCP).

It belongs to the cation transport ATPase (P-type) (TC 3.A.3) family. Type IIC subfamily. The sodium/potassium-transporting ATPase is composed of a catalytic alpha subunit, an auxiliary non-catalytic beta subunit and an additional regulatory subunit. In terms of tissue distribution, high levels are found in some adult tissues: Malpighian tubules, indirect flight muscles, tubular leg muscles and throughout the nervous system (brain, optic lobes, retina and ventral thoracic neuromere). Lower levels are detected at the posterior end where the reproductive organs and rectum are located.

The protein localises to the cell membrane. The enzyme catalyses K(+)(out) + Na(+)(in) + ATP + H2O = K(+)(in) + Na(+)(out) + ADP + phosphate + H(+). Its function is as follows. This is the catalytic component of the active enzyme, which catalyzes the hydrolysis of ATP coupled with the exchange of sodium and potassium ions across the plasma membrane. This action creates the electrochemical gradient of sodium and potassium ions, providing the energy for active transport of various nutrients. The chain is Sodium/potassium-transporting ATPase subunit alpha (Atpalpha) from Drosophila melanogaster (Fruit fly).